A 577-amino-acid chain; its full sequence is Cleavage stimulation factor subunit 2 (577 aa).

Ser14 is modified (phosphoserine). Positions 16–94 constitute an RRM domain; it reads RSVFVGNIPY…RALRVDNAAS (79 aa). The segment at 108 to 248 is interactions with CSTF3 and SYMPK; the sequence is APVIESPYGE…VNGAPPLMQA (141 aa). Lys189 is covalently cross-linked (Glycyl lysine isopeptide (Lys-Gly) (interchain with G-Cter in SUMO2)). A disordered region spans residues 207–230; that stretch reads PVHGAGPGSGSNVSMNQQNPQAPQ. The residue at position 308 (Arg308) is an Omega-N-methylarginine. The segment at 319–409 is disordered; sequence RGLLGDAPND…DGRGGRDPRG (91 aa). Positions 360–373 are enriched in basic and acidic residues; sequence PGHESRGPPPHELR. Residues 410–414 form a 1; approximate repeat; sequence IDARG. The tract at residues 410 to 469 is 12 X 5 AA tandem repeats of M-E-A-R-[AG]; sequence IDARGMEARAMEARGLDARGLEARAMEARAMEARAMEARAMEARAMEVRGMEARGMDTRG. 2 repeat units span residues 415–419 and 420–424. A 4; approximate repeat occupies 425–429; the sequence is LDARG. One copy of the 5; approximate repeat lies at 430-434; the sequence is LEARA. 4 repeat units span residues 435 to 439, 440 to 444, 445 to 449, and 450 to 454. The 10; approximate repeat unit spans residues 455 to 459; that stretch reads MEVRG. The stretch at 460 to 464 is repeat 11; the sequence is MEARG. A 12; approximate repeat occupies 465–469; that stretch reads MDTRG. Arg468 and Arg475 each carry omega-N-methylarginine. Residues 509 to 532 form a disordered region; that stretch reads LQGASIQGGSQPGGFSPGQNQVTP. The interval 514-577 is interaction with RPO2TC1; that stretch reads IQGGSQPGGF…EQIQKSTGAP (64 aa). Phosphoserine is present on residues Ser518 and Ser524.

As to quaternary structure, the CSTF complex is composed of CSTF1 (50 kDa subunit), CSTF2 (64 kDa subunit) and CSTF3 (77 kDa subunit). CSTF2 directly interacts with CSTF3, SYMPK and RPO2TC1. Interacts with HSF1 in heat-stressed cells. Interacts with CPSF2, CPSF3 and FIP1L1. Interacts with DDX1.

The protein localises to the nucleus. Functionally, one of the multiple factors required for polyadenylation and 3'-end cleavage of mammalian pre-mRNAs. This subunit is directly involved in the binding to pre-mRNAs. The polypeptide is Cleavage stimulation factor subunit 2 (CSTF2) (Pongo abelii (Sumatran orangutan)).